A 291-amino-acid polypeptide reads, in one-letter code: Glycolipid transfer protein domain-containing protein 2 (291 aa).

Asparagine 276 is a glycosylation site (N-linked (GlcNAc...) asparagine).

Belongs to the GLTP family.

The chain is Glycolipid transfer protein domain-containing protein 2 (GLTPD2) from Homo sapiens (Human).